Here is a 217-residue protein sequence, read N- to C-terminus: Ras-related protein Rab11B (217 aa).

GTP is bound at residue 21–28; the sequence is GDSGVGKS. The Effector region motif lies at 43 to 51; sequence SKSTIGVEF. GTP is bound by residues 69–73 and 127–130; these read DTAGQ and NKAD. 2 S-geranylgeranyl cysteine lipidation sites follow: cysteine 214 and cysteine 215.

Belongs to the small GTPase superfamily. Rab family.

Its subcellular location is the cell membrane. This chain is Ras-related protein Rab11B (RAB11B), found in Nicotiana tabacum (Common tobacco).